Reading from the N-terminus, the 404-residue chain is Methionine aminopeptidase 1D, mitochondrial (404 aa).

Residues 1–58 (MNKILKNIINKSSINNVFKTSFNGGISSSSSSSSSYLNNNNNIIKSYNVQQKQQQRYY) constitute a mitochondrion transit peptide. Positions 86–109 (VRSQRLTKKTASPLEGMNRKERRK) are disordered. Substrate is bound at residue His-232. Residues Asp-249, Asp-260, and His-323 each contribute to the a divalent metal cation site. Residue His-330 participates in substrate binding. A divalent metal cation-binding residues include Glu-355 and Glu-389.

It belongs to the peptidase M24A family. Methionine aminopeptidase type 1 subfamily. It depends on Co(2+) as a cofactor. Zn(2+) is required as a cofactor. Requires Mn(2+) as cofactor. Fe(2+) serves as cofactor.

It localises to the mitochondrion. The catalysed reaction is Release of N-terminal amino acids, preferentially methionine, from peptides and arylamides.. Functionally, removes the N-terminal methionine from nascent proteins. The N-terminal methionine is often cleaved when the second residue in the primary sequence is small and uncharged (Met-Ala-, Cys, Gly, Pro, Ser, Thr, or Val). The chain is Methionine aminopeptidase 1D, mitochondrial (metap1d) from Dictyostelium discoideum (Social amoeba).